We begin with the raw amino-acid sequence, 301 residues long: Putative S-adenosyl-L-methionine-dependent methyltransferase MT0851 (301 aa).

S-adenosyl-L-methionine contacts are provided by residues Asp-127 and 156–157 (DL).

This sequence belongs to the UPF0677 family.

Its function is as follows. Exhibits S-adenosyl-L-methionine-dependent methyltransferase activity. The polypeptide is Putative S-adenosyl-L-methionine-dependent methyltransferase MT0851 (Mycobacterium tuberculosis (strain CDC 1551 / Oshkosh)).